Consider the following 734-residue polypeptide: Methionine--tRNA ligase (734 aa).

The short motif at 12–22 (PYVNNIPHLGN) is the 'HIGH' region element. Zn(2+) contacts are provided by Cys-143, Cys-146, Cys-155, and Cys-158. The 'KMSKS' region signature appears at 330–334 (KFSKS). Lys-333 contacts ATP. The tRNA-binding domain maps to 570–675 (FREKVLLRVV…QNPIAGERII (106 aa)).

It belongs to the class-I aminoacyl-tRNA synthetase family. MetG type 1 subfamily. As to quaternary structure, homodimer. The cofactor is Zn(2+).

It is found in the cytoplasm. It catalyses the reaction tRNA(Met) + L-methionine + ATP = L-methionyl-tRNA(Met) + AMP + diphosphate. In terms of biological role, is required not only for elongation of protein synthesis but also for the initiation of all mRNA translation through initiator tRNA(fMet) aminoacylation. The polypeptide is Methionine--tRNA ligase (Borreliella burgdorferi (strain ZS7) (Borrelia burgdorferi)).